A 490-amino-acid chain; its full sequence is Subtilisin-like protease 8 (490 aa).

The signal sequence occupies residues 1–26 (MKGLLSLSVLPVLAYASPMIVDSIHQ). Positions 27–134 (NAAPILSSTN…YIERDSEVHT (108 aa)) are excised as a propeptide. Residues 43-134 (SYIVVFKKGV…YIERDSEVHT (92 aa)) enclose the Inhibitor I9 domain. The Peptidase S8 domain occupies 144–450 (PWGLARISHR…GGSDDYKKII (307 aa)). Residues aspartate 180 and histidine 212 each act as charge relay system in the active site. N-linked (GlcNAc...) asparagine glycosylation occurs at asparagine 282. Catalysis depends on serine 378, which acts as the Charge relay system. A glycan (N-linked (GlcNAc...) asparagine) is linked at asparagine 456.

This sequence belongs to the peptidase S8 family.

Its subcellular location is the secreted. Functionally, secreted subtilisin-like serine protease with keratinolytic activity that contributes to pathogenicity. This Arthroderma benhamiae (strain ATCC MYA-4681 / CBS 112371) (Trichophyton mentagrophytes) protein is Subtilisin-like protease 8 (SUB8).